The following is a 491-amino-acid chain: Beta-galactosidase (491 aa).

Glu209 acts as the Proton donor in catalysis. Glu389 functions as the Nucleophile in the catalytic mechanism.

This sequence belongs to the glycosyl hydrolase 1 family.

The catalysed reaction is Hydrolysis of terminal non-reducing beta-D-galactose residues in beta-D-galactosides.. The polypeptide is Beta-galactosidase (bgaS) (Sulfolobus acidocaldarius (strain ATCC 33909 / DSM 639 / JCM 8929 / NBRC 15157 / NCIMB 11770)).